A 342-amino-acid polypeptide reads, in one-letter code: Anthranilate phosphoribosyltransferase (342 aa).

5-phospho-alpha-D-ribose 1-diphosphate contacts are provided by residues Gly83, 86 to 87 (GD), Thr91, 93 to 96 (NIST), 111 to 119 (KHGGRSVSS), and Ser123. Gly83 is a binding site for anthranilate. Ser95 lines the Mg(2+) pocket. Position 169 (Arg169) interacts with anthranilate. 2 residues coordinate Mg(2+): Asp228 and Glu229.

This sequence belongs to the anthranilate phosphoribosyltransferase family. Homodimer. The cofactor is Mg(2+).

It carries out the reaction N-(5-phospho-beta-D-ribosyl)anthranilate + diphosphate = 5-phospho-alpha-D-ribose 1-diphosphate + anthranilate. The protein operates within amino-acid biosynthesis; L-tryptophan biosynthesis; L-tryptophan from chorismate: step 2/5. Catalyzes the transfer of the phosphoribosyl group of 5-phosphorylribose-1-pyrophosphate (PRPP) to anthranilate to yield N-(5'-phosphoribosyl)-anthranilate (PRA). The chain is Anthranilate phosphoribosyltransferase from Laribacter hongkongensis (strain HLHK9).